Reading from the N-terminus, the 326-residue chain is Glycine N(alpha)-acyltransferase (326 aa).

The protein belongs to the acetyltransferase family.

The enzyme catalyses a (3R)-hydroxyacyl-[ACP] + glycine = a lyso-glycine lipid + holo-[ACP] + H(+). It catalyses the reaction (3R)-hydroxyhexadecanoyl-[ACP] + glycine = N-[(3R)-3-hydroxyhexadecanoyl]-glycine + holo-[ACP] + H(+). Its pathway is lipid metabolism. Its function is as follows. Is involved in the production of glycine lipids (GL), which are phosphorus-free membrane lipids. Catalyzes the first step of GL biosynthesis, i.e. the N-acylation of glycine via addition of a 3-hydroxy fatty acyl group, to form a range of monoacylated glycine (also named lyso-glycine lipids or lyso-GL). As an example, catalyzes the production of commendamide, an N-acylated (3-OH C16:0) derivative of glycine with hemolytic activity and the ability to solubilize cholesterol micelles; this compound can also activate NF-kB through the G-protein coupled receptor GPCR G2A/132. This is Glycine N(alpha)-acyltransferase from Phocaeicola vulgatus (strain ATCC 8482 / DSM 1447 / JCM 5826 / CCUG 4940 / NBRC 14291 / NCTC 11154) (Bacteroides vulgatus).